Here is a 375-residue protein sequence, read N- to C-terminus: tRNA-specific 2-thiouridylase MnmA (375 aa).

Residues 17–24 (GMSGGVDS) and methionine 43 each bind ATP. An interaction with target base in tRNA region spans residues 103–105 (NPD). Catalysis depends on cysteine 108, which acts as the Nucleophile. Cysteines 108 and 204 form a disulfide. Glycine 132 contributes to the ATP binding site. Positions 154 to 156 (KDQ) are interaction with tRNA. Residue cysteine 204 is the Cysteine persulfide intermediate of the active site. Residues 316–317 (RY) form an interaction with tRNA region.

Belongs to the MnmA/TRMU family.

The protein resides in the cytoplasm. It carries out the reaction S-sulfanyl-L-cysteinyl-[protein] + uridine(34) in tRNA + AH2 + ATP = 2-thiouridine(34) in tRNA + L-cysteinyl-[protein] + A + AMP + diphosphate + H(+). Catalyzes the 2-thiolation of uridine at the wobble position (U34) of tRNA, leading to the formation of s(2)U34. The chain is tRNA-specific 2-thiouridylase MnmA from Stutzerimonas stutzeri (strain A1501) (Pseudomonas stutzeri).